The chain runs to 262 residues: Type III pantothenate kinase (262 aa).

ATP is bound at residue 6-13 (DVGNTNTV). Substrate contacts are provided by residues Tyr101 and 108–111 (GADR). Asp110 acts as the Proton acceptor in catalysis. Asp130 contacts K(+). Residue Thr133 participates in ATP binding. A substrate-binding site is contributed by Thr186.

It belongs to the type III pantothenate kinase family. Homodimer. NH4(+) is required as a cofactor. The cofactor is K(+).

It is found in the cytoplasm. The catalysed reaction is (R)-pantothenate + ATP = (R)-4'-phosphopantothenate + ADP + H(+). It participates in cofactor biosynthesis; coenzyme A biosynthesis; CoA from (R)-pantothenate: step 1/5. In terms of biological role, catalyzes the phosphorylation of pantothenate (Pan), the first step in CoA biosynthesis. The sequence is that of Type III pantothenate kinase from Desulforapulum autotrophicum (strain ATCC 43914 / DSM 3382 / VKM B-1955 / HRM2) (Desulfobacterium autotrophicum).